Reading from the N-terminus, the 396-residue chain is Enoyl-[acyl-carrier-protein] reductase [NADH] (396 aa).

Residues 47-52, 73-74, 110-111, and 138-139 each bind NAD(+); these read GASTGF, FE, DA, and LA. Residue tyrosine 224 participates in substrate binding. The active-site Proton donor is the tyrosine 234. NAD(+)-binding positions include lysine 243 and 272-274; that span reads LVT.

It belongs to the TER reductase family. In terms of assembly, monomer.

It catalyses the reaction a 2,3-saturated acyl-[ACP] + NAD(+) = a (2E)-enoyl-[ACP] + NADH + H(+). Its pathway is lipid metabolism; fatty acid biosynthesis. Functionally, involved in the final reduction of the elongation cycle of fatty acid synthesis (FAS II). Catalyzes the reduction of a carbon-carbon double bond in an enoyl moiety that is covalently linked to an acyl carrier protein (ACP). The chain is Enoyl-[acyl-carrier-protein] reductase [NADH] from Flavobacterium psychrophilum (strain ATCC 49511 / DSM 21280 / CIP 103535 / JIP02/86).